The sequence spans 598 residues: Probable ATP-dependent RNA helicase DDX52 (598 aa).

N6-acetyllysine is present on lysine 15. Serine 39 is subject to Phosphoserine. Residues 59–98 form a disordered region; it reads CGGLQTQQELQNEETTEGGLLERSKEPKKKKRKKMTADVP. The Q motif motif lies at 166–194; it reads QLDQEYKISPRLLQNILDAGFQVPTPIQM. One can recognise a Helicase ATP-binding domain in the interval 197–375; that stretch reads IPVMLHGREL…KLNLDNIVSV (179 aa). Residue 210 to 217 coordinates ATP; sequence APTGSGKT. The DEAD box signature appears at 319–322; that stretch reads DESD. The Helicase C-terminal domain maps to 386–547; sequence TVEQELLFVG…PVPEYIKGFQ (162 aa). Residues 578 to 598 are disordered; sequence AKQKKVAGQNSKKKETLKGKS. The segment covering 589–598 has biased composition (basic and acidic residues); sequence KKKETLKGKS.

This sequence belongs to the DEAD box helicase family. DDX52/ROK1 subfamily.

Its subcellular location is the nucleus. It is found in the nucleolus. It carries out the reaction ATP + H2O = ADP + phosphate + H(+). Functionally, required for efficient ribosome biogenesis. May control cell cycle progression by regulating translation of mRNAs that contain a terminal oligo pyrimidine (TOP) motif in their 5' UTRs, such as GTPBP4. This Rattus norvegicus (Rat) protein is Probable ATP-dependent RNA helicase DDX52 (Ddx52).